A 382-amino-acid polypeptide reads, in one-letter code: Anhydro-N-acetylmuramic acid kinase (382 aa).

An ATP-binding site is contributed by 9 to 16 (GTSLDGID).

This sequence belongs to the anhydro-N-acetylmuramic acid kinase family.

The enzyme catalyses 1,6-anhydro-N-acetyl-beta-muramate + ATP + H2O = N-acetyl-D-muramate 6-phosphate + ADP + H(+). It functions in the pathway amino-sugar metabolism; 1,6-anhydro-N-acetylmuramate degradation. Its pathway is cell wall biogenesis; peptidoglycan recycling. Its function is as follows. Catalyzes the specific phosphorylation of 1,6-anhydro-N-acetylmuramic acid (anhMurNAc) with the simultaneous cleavage of the 1,6-anhydro ring, generating MurNAc-6-P. Is required for the utilization of anhMurNAc either imported from the medium or derived from its own cell wall murein, and thus plays a role in cell wall recycling. The chain is Anhydro-N-acetylmuramic acid kinase from Bacillus thuringiensis subsp. konkukian (strain 97-27).